The following is a 292-amino-acid chain: AT-hook motif nuclear-localized protein 23 (292 aa).

Positions 23-100 (HLHHNSSSDD…SKNKPKPPVI (78 aa)) are disordered. Gly residues predominate over residues 60–79 (SGGGSGSSGGGGGHGGGGDV). The a.T hook DNA-binding region spans 82–94 (RRPRGRPPGSKNK). Residues 106–242 (ANTLRAHILE…EDEQQQQLGG (137 aa)) form the PPC domain.

It is found in the nucleus. Functionally, transcription factor that specifically binds AT-rich DNA sequences related to the nuclear matrix attachment regions (MARs). This is AT-hook motif nuclear-localized protein 23 from Arabidopsis thaliana (Mouse-ear cress).